A 685-amino-acid chain; its full sequence is E3 ubiquitin ligase Rnf157 (685 aa).

G2 is lipidated: N-myristoyl glycine. The segment at 276–315 (ECVVCLSDVRDTLILPCRHLCLCNTCADTLRYQANNCPIC) adopts an RING-type zinc-finger fold. The short motif at 329–332 (RKKL) is the D-box 1 element. Disordered regions lie at residues 339-361 (SFNP…ENIP), 433-584 (LSKS…AGEQ), and 650-672 (LGGR…EASA). The segment covering 434-443 (SKSISQNSSV) has biased composition (low complexity). Residues 478–537 (ESENLTLSSSGAVDQSSCTGTPLSSTISSPEDPASSSLAQSVMSMASSQISTDTVSSMSG) show a composition bias toward polar residues. Residues 552–561 (PSPRAASRAP) are compositionally biased toward low complexity. The D-box 2 signature appears at 657–660 (ARPR).

As to quaternary structure, interacts with APBB1. Interacts with CHD1; CHD1-binding controls RNF157 stability. Also interacts with ATRN, MEGF8, TECR, MSI2, PLRG1, BYSL, MTERF3, PSMA1, MRPS18B, PRPF4, FASTKD2, SLC25A1, SMU1, CNOT9, MRPS2, MAGT1, FXR2, EMD, PSMD8, HDAC1, RAN, HSD17B12, TXNDC5 and MRPL19.

It localises to the cytoplasm. It carries out the reaction S-ubiquitinyl-[E2 ubiquitin-conjugating enzyme]-L-cysteine + [acceptor protein]-L-lysine = [E2 ubiquitin-conjugating enzyme]-L-cysteine + N(6)-ubiquitinyl-[acceptor protein]-L-lysine.. Functionally, E3 ubiquitin ligase that ubiquitinates APBB1 for its degradation by the proteasome and thus prevents apoptosis and promotes survival of neurons. Has a dual role in neurons as it is also required for dendrite growth and maintenance for which its ligase activity is not critical. May act as a scaffold molecule to regulate this process. Acts as a downstream effector of the interconnected PI3K and MAPK signaling pathways and thus participates in the regulation of the cell cycle. The polypeptide is E3 ubiquitin ligase Rnf157 (Rnf157) (Mus musculus (Mouse)).